The following is a 238-amino-acid chain: tRNA (guanine-N(7)-)-methyltransferase (238 aa).

Residues 1-12 are compositionally biased toward polar residues; that stretch reads MTDTAENQTPND. The segment at 1-20 is disordered; that stretch reads MTDTAENQTPNDRQAGHPRS. 4 residues coordinate S-adenosyl-L-methionine: Glu-70, Asp-95, Asp-122, and Asp-145. The active site involves Asp-145. Substrate-binding positions include Lys-149, Asp-181, and 216–219; that span reads TKFE.

This sequence belongs to the class I-like SAM-binding methyltransferase superfamily. TrmB family.

It carries out the reaction guanosine(46) in tRNA + S-adenosyl-L-methionine = N(7)-methylguanosine(46) in tRNA + S-adenosyl-L-homocysteine. The protein operates within tRNA modification; N(7)-methylguanine-tRNA biosynthesis. Catalyzes the formation of N(7)-methylguanine at position 46 (m7G46) in tRNA. The polypeptide is tRNA (guanine-N(7)-)-methyltransferase (Neisseria gonorrhoeae (strain NCCP11945)).